Consider the following 406-residue polypeptide: MTFSVDKVRADFPVLSREVNGLPLAYLDSAASAQKPGQVIDAEAEFYRHGYAAVHRGIHTLSAQATEKMENVRKQASLFINARSAEELVFVRGTTEGINLVANSWGNSNVRAGDNIIISQMEHHANIVPWQMLCARVGAELRVIPLNPDGTLQLETLPTLFDEKTRLLAITHVSNVLGTENPLAEMITLAHQHGAKVLVDGAQAVMHHLVDVQALDCDFYVFSGHKLYGPTGIGILYVKEALLQEMPPWEGGGSMIATVSLSEGTTWTKAPWRFEAGTPNTGGIIGLGAALEYVSALGLNNIAEYEQNLMHYALSQLESVPDLTLYGPQNRLGVIAFNLGKHHAYDVGSFLDNYGIAVRTGHHCAMPLMAYYNVPAMCRASLAMYNTHEEVDRLVTGLQRIHRLLG.

N6-(pyridoxal phosphate)lysine is present on Lys226. Cys364 serves as the catalytic Cysteine persulfide intermediate.

Belongs to the class-V pyridoxal-phosphate-dependent aminotransferase family. Csd subfamily. In terms of assembly, homodimer. Interacts with SufE and the SufBCD complex composed of SufB, SufC and SufD. The interaction with SufE is required to mediate the direct transfer of the sulfur atom from the S-sulfanylcysteine. The cofactor is pyridoxal 5'-phosphate.

The protein localises to the cytoplasm. It carries out the reaction (sulfur carrier)-H + L-cysteine = (sulfur carrier)-SH + L-alanine. The enzyme catalyses L-selenocysteine + AH2 = hydrogenselenide + L-alanine + A + H(+). The protein operates within cofactor biosynthesis; iron-sulfur cluster biosynthesis. Cysteine desulfurases mobilize the sulfur from L-cysteine to yield L-alanine, an essential step in sulfur metabolism for biosynthesis of a variety of sulfur-containing biomolecules. Component of the suf operon, which is activated and required under specific conditions such as oxidative stress and iron limitation. Acts as a potent selenocysteine lyase in vitro, that mobilizes selenium from L-selenocysteine. Selenocysteine lyase activity is however unsure in vivo. This Escherichia coli O9:H4 (strain HS) protein is Cysteine desulfurase.